The primary structure comprises 251 residues: uncharacterized protein (251 aa).

An N-terminal signal peptide occupies residues 1–15 (MSAISSLVLIGWAMC). Residues Asn-225 and Asn-242 are each glycosylated (N-linked (GlcNAc...) asparagine).

This is an uncharacterized protein from Encephalitozoon cuniculi (strain GB-M1) (Microsporidian parasite).